Consider the following 194-residue polypeptide: Calcium channel flower (194 aa).

Helical transmembrane passes span 35 to 55 (LGIV…FSII), 66 to 88 (IIQM…VCFE), and 113 to 133 (AIPP…GLIF).

The protein belongs to the calcium channel flower family. As to quaternary structure, homomultimer. Associates with the dally/ magu complex.

Its subcellular location is the cytoplasmic vesicle. It localises to the secretory vesicle. The protein localises to the synaptic vesicle membrane. It is found in the presynaptic cell membrane. The protein resides in the endosome. With respect to regulation, channel activity is inhibited by La(3+), which reduces Ca(2+) influx and thus inhibits it's function in promoting activity-dependent bulk endocytosis (ADBE) in response to high stimuli. Transmembrane protein which mediates synaptic endocytosis, fitness-based cell culling, neuronal culling, morphogen gradient scaling, and calcium transport. Regulates synaptic endocytosis and hence couples exo- with endocytosis. Controls two major modes of synaptic vesicle (SV) endocytosis in the synaptic boutons of neuromuscular junctions (NMJs); Ca(2+) channel-independent Clathrin-mediated endocytosis (CME) in response to mild stimulation, and Ca(2+) channel-dependent activity-dependent bulk endocytosis (ADBE) in response to strong stimulation. Functions in ADBE and subsequent SV reformation from bulk endosomes by initiating Ca(2+) channel-dependent phosphatidylinositol 4,5-bisphosphate (PtdIns(4,5)P2) compartmentalization in synaptic boutons. There it acts at the periactive zone to provide the low Ca(2+) levels required to initiate Calcineurin activation and upregulate PtdIns(4,5)P2. Conversely PtdIns(4,5)P2 enhances fwe Ca(2+) channel-activity, establishing a positive feedback loop that induces PtdIns(4,5)P2 microdomain at the periactive zone. These microdomains trigger bulk membrane invagination (i.e. ADBE) by triggering actin polymerization while also promoting localization of fwe to bulk endosomes, thereby removing the ADBE trigger to reduce endocytosis and prevent excess membrane uptake. PtdIns(4,5)P2 then promotes SV reformation from the bulk endosomes, to coordinate ADBE and subsequent SV reformation. Different combinations of the flower isoforms at the cell membrane are also required for the identification and elimination of suboptimal or supernumerary cells during development, regeneration, and adulthood. Required for the recognition and elimination of unfit cells in the developing wing during cell competition. In the developing pupal retina, mediates the elimination of unwanted postmitotic neurons, including supernumerary photoreceptor neurons that form at the periphery of the retina and are contained within incomplete ommatidia units. Also required for efficient elimination and replacement of old neurons by newly generated neurons during regeneration in the adult brain following mechanical injury. Downstream of the flower fitness fingerprints, cells identified as unwanted or unfit are eliminated via apoptosis through the expression of ahuizotl (azot). However, the cells marked for elimination by the flower isoforms only undergo apoptosis if additional thresholds are met; (1) their neighboring fit/healthy cells express different levels of the fwe isoforms, and (2) the levels of the protective signal SPARC expressed by the loser or unwanted cells are unable to inhibit caspase activation. These additional thresholds for flower-mediated apoptosis, allows useful cells to recover from transient and limited stress before they are unnecessarily eliminated. Functions with dally and magu in a mechanism of scaling, which utilises apoptosis to ensure that the dpp morphogen gradient, which mediates organ growth, remains proportional to the size of the growing wing. In this mechanism, fwe represses dally- and Magu-dependent activity in expanding the gradient, and dally/Magu inhibits fwe-dependent apoptosis to keep cell death rate low. When the levels of these different proteins are optimally regulated the gradient correctly scales with organ growth but when this fails, fwe-mediated apoptosis is activated to trim the developing tissue to match the correct size of the gradient. This Drosophila yakuba (Fruit fly) protein is Calcium channel flower.